We begin with the raw amino-acid sequence, 262 residues long: L-aspartate dehydrogenase (262 aa).

Positions 128 and 183 each coordinate NAD(+). The active site involves His-213.

This sequence belongs to the L-aspartate dehydrogenase family.

It carries out the reaction L-aspartate + NADP(+) + H2O = oxaloacetate + NH4(+) + NADPH + H(+). The enzyme catalyses L-aspartate + NAD(+) + H2O = oxaloacetate + NH4(+) + NADH + H(+). It participates in cofactor biosynthesis; NAD(+) biosynthesis; iminoaspartate from L-aspartate (dehydrogenase route): step 1/1. In terms of biological role, specifically catalyzes the NAD or NADP-dependent dehydrogenation of L-aspartate to iminoaspartate. The chain is L-aspartate dehydrogenase from Methanopyrus kandleri (strain AV19 / DSM 6324 / JCM 9639 / NBRC 100938).